The primary structure comprises 387 residues: Phosphoglycerate kinase (387 aa).

Substrate is bound by residues 21–23, Arg-36, 59–62, Arg-113, and Arg-146; these read DLN and HLGR. ATP contacts are provided by residues Lys-197, Glu-314, and 340 to 343; that span reads GGDT.

The protein belongs to the phosphoglycerate kinase family. In terms of assembly, monomer.

It localises to the cytoplasm. The enzyme catalyses (2R)-3-phosphoglycerate + ATP = (2R)-3-phospho-glyceroyl phosphate + ADP. It functions in the pathway carbohydrate degradation; glycolysis; pyruvate from D-glyceraldehyde 3-phosphate: step 2/5. This Pseudomonas paraeruginosa (strain DSM 24068 / PA7) (Pseudomonas aeruginosa (strain PA7)) protein is Phosphoglycerate kinase.